A 415-amino-acid polypeptide reads, in one-letter code: 4-hydroxy-3-methylbut-2-enyl diphosphate reductase (415 aa).

Residue cysteine 66 coordinates [4Fe-4S] cluster. Residue histidine 96 coordinates (2E)-4-hydroxy-3-methylbut-2-enyl diphosphate. Residue histidine 96 participates in dimethylallyl diphosphate binding. Histidine 96 is an isopentenyl diphosphate binding site. Cysteine 158 is a [4Fe-4S] cluster binding site. Histidine 186 is a (2E)-4-hydroxy-3-methylbut-2-enyl diphosphate binding site. Dimethylallyl diphosphate is bound at residue histidine 186. Histidine 186 is a binding site for isopentenyl diphosphate. Glutamate 188 serves as the catalytic Proton donor. Residue threonine 259 coordinates (2E)-4-hydroxy-3-methylbut-2-enyl diphosphate. Cysteine 297 lines the [4Fe-4S] cluster pocket. Residues serine 326, serine 327, asparagine 328, and serine 388 each contribute to the (2E)-4-hydroxy-3-methylbut-2-enyl diphosphate site. Residues serine 326, serine 327, asparagine 328, and serine 388 each coordinate dimethylallyl diphosphate. Isopentenyl diphosphate-binding residues include serine 326, serine 327, asparagine 328, and serine 388.

It belongs to the IspH family. [4Fe-4S] cluster serves as cofactor.

The catalysed reaction is isopentenyl diphosphate + 2 oxidized [2Fe-2S]-[ferredoxin] + H2O = (2E)-4-hydroxy-3-methylbut-2-enyl diphosphate + 2 reduced [2Fe-2S]-[ferredoxin] + 2 H(+). It catalyses the reaction dimethylallyl diphosphate + 2 oxidized [2Fe-2S]-[ferredoxin] + H2O = (2E)-4-hydroxy-3-methylbut-2-enyl diphosphate + 2 reduced [2Fe-2S]-[ferredoxin] + 2 H(+). It participates in isoprenoid biosynthesis; dimethylallyl diphosphate biosynthesis; dimethylallyl diphosphate from (2E)-4-hydroxy-3-methylbutenyl diphosphate: step 1/1. It functions in the pathway isoprenoid biosynthesis; isopentenyl diphosphate biosynthesis via DXP pathway; isopentenyl diphosphate from 1-deoxy-D-xylulose 5-phosphate: step 6/6. Functionally, catalyzes the conversion of 1-hydroxy-2-methyl-2-(E)-butenyl 4-diphosphate (HMBPP) into a mixture of isopentenyl diphosphate (IPP) and dimethylallyl diphosphate (DMAPP). Acts in the terminal step of the DOXP/MEP pathway for isoprenoid precursor biosynthesis. This Acaryochloris marina (strain MBIC 11017) protein is 4-hydroxy-3-methylbut-2-enyl diphosphate reductase.